Here is a 232-residue protein sequence, read N- to C-terminus: Orotate phosphoribosyltransferase (232 aa).

5-phospho-alpha-D-ribose 1-diphosphate-binding positions include Arg107, Lys108, Lys111, and 133–141 (EDLTTDGGS). Orotate is bound at residue Thr137.

This sequence belongs to the purine/pyrimidine phosphoribosyltransferase family. PyrE subfamily. As to quaternary structure, homodimer. It depends on Mg(2+) as a cofactor.

It carries out the reaction orotidine 5'-phosphate + diphosphate = orotate + 5-phospho-alpha-D-ribose 1-diphosphate. Its pathway is pyrimidine metabolism; UMP biosynthesis via de novo pathway; UMP from orotate: step 1/2. Functionally, catalyzes the transfer of a ribosyl phosphate group from 5-phosphoribose 1-diphosphate to orotate, leading to the formation of orotidine monophosphate (OMP). This chain is Orotate phosphoribosyltransferase, found in Cereibacter sphaeroides (strain ATCC 17025 / ATH 2.4.3) (Rhodobacter sphaeroides).